The following is a 159-amino-acid chain: MSNVFTHINADGNAHMVDVTEKAVTEREARAEAFIEMASTTLEMIMSGSHHKGDVFATARIAGIQAAKKTSDLIPLCHPLMLTKVEVELEAQPEHNRVRITSLCKLSGKTGVEMEALTAASVAALTIYDMCKAVQKDMVISQVRLLEKRGGKSGHFKAE.

Substrate contacts are provided by residues 76–78 and 114–115; these read LCH and ME. Residue Asp129 is part of the active site.

This sequence belongs to the MoaC family. In terms of assembly, homohexamer; trimer of dimers.

It carries out the reaction (8S)-3',8-cyclo-7,8-dihydroguanosine 5'-triphosphate = cyclic pyranopterin phosphate + diphosphate. It participates in cofactor biosynthesis; molybdopterin biosynthesis. In terms of biological role, catalyzes the conversion of (8S)-3',8-cyclo-7,8-dihydroguanosine 5'-triphosphate to cyclic pyranopterin monophosphate (cPMP). This Shewanella oneidensis (strain ATCC 700550 / JCM 31522 / CIP 106686 / LMG 19005 / NCIMB 14063 / MR-1) protein is Cyclic pyranopterin monophosphate synthase.